The primary structure comprises 436 residues: Methylenetetrahydrofolate--tRNA-(uracil-5-)-methyltransferase TrmFO (436 aa).

10–15 provides a ligand contact to FAD; that stretch reads GAGLAG.

It belongs to the MnmG family. TrmFO subfamily. The cofactor is FAD.

Its subcellular location is the cytoplasm. The enzyme catalyses uridine(54) in tRNA + (6R)-5,10-methylene-5,6,7,8-tetrahydrofolate + NADH + H(+) = 5-methyluridine(54) in tRNA + (6S)-5,6,7,8-tetrahydrofolate + NAD(+). It catalyses the reaction uridine(54) in tRNA + (6R)-5,10-methylene-5,6,7,8-tetrahydrofolate + NADPH + H(+) = 5-methyluridine(54) in tRNA + (6S)-5,6,7,8-tetrahydrofolate + NADP(+). In terms of biological role, catalyzes the folate-dependent formation of 5-methyl-uridine at position 54 (M-5-U54) in all tRNAs. The protein is Methylenetetrahydrofolate--tRNA-(uracil-5-)-methyltransferase TrmFO of Staphylococcus carnosus (strain TM300).